The sequence spans 94 residues: Integration host factor subunit beta (94 aa).

This sequence belongs to the bacterial histone-like protein family. In terms of assembly, heterodimer of an alpha and a beta chain.

This protein is one of the two subunits of integration host factor, a specific DNA-binding protein that functions in genetic recombination as well as in transcriptional and translational control. This is Integration host factor subunit beta from Nitrosospira multiformis (strain ATCC 25196 / NCIMB 11849 / C 71).